Reading from the N-terminus, the 344-residue chain is Fructose-1,6-bisphosphatase class 1 (344 aa).

4 residues coordinate Mg(2+): Glu-91, Asp-110, Leu-112, and Asp-113. Substrate-binding positions include 113-116 (DGSS) and Asn-200. Glu-272 serves as a coordination point for Mg(2+).

It belongs to the FBPase class 1 family. In terms of assembly, homotetramer. It depends on Mg(2+) as a cofactor.

It localises to the cytoplasm. The catalysed reaction is beta-D-fructose 1,6-bisphosphate + H2O = beta-D-fructose 6-phosphate + phosphate. It functions in the pathway carbohydrate biosynthesis; Calvin cycle. This Rhodopseudomonas palustris (strain BisA53) protein is Fructose-1,6-bisphosphatase class 1.